The primary structure comprises 158 residues: Cyclic pyranopterin monophosphate synthase (158 aa).

Substrate contacts are provided by residues 75 to 77 (LCH) and 113 to 114 (ME). The active site involves aspartate 128.

It belongs to the MoaC family. In terms of assembly, homohexamer; trimer of dimers.

The enzyme catalyses (8S)-3',8-cyclo-7,8-dihydroguanosine 5'-triphosphate = cyclic pyranopterin phosphate + diphosphate. It participates in cofactor biosynthesis; molybdopterin biosynthesis. Functionally, catalyzes the conversion of (8S)-3',8-cyclo-7,8-dihydroguanosine 5'-triphosphate to cyclic pyranopterin monophosphate (cPMP). The polypeptide is Cyclic pyranopterin monophosphate synthase (Dinoroseobacter shibae (strain DSM 16493 / NCIMB 14021 / DFL 12)).